Here is a 549-residue protein sequence, read N- to C-terminus: Glucose-6-phosphate isomerase (549 aa).

Glu353 serves as the catalytic Proton donor. Active-site residues include His384 and Lys513.

The protein belongs to the GPI family.

It is found in the cytoplasm. The catalysed reaction is alpha-D-glucose 6-phosphate = beta-D-fructose 6-phosphate. It functions in the pathway carbohydrate biosynthesis; gluconeogenesis. It participates in carbohydrate degradation; glycolysis; D-glyceraldehyde 3-phosphate and glycerone phosphate from D-glucose: step 2/4. Functionally, catalyzes the reversible isomerization of glucose-6-phosphate to fructose-6-phosphate. In Bartonella bacilliformis (strain ATCC 35685 / KC583 / Herrer 020/F12,63), this protein is Glucose-6-phosphate isomerase.